Consider the following 124-residue polypeptide: Non-specific lipid-transfer protein (124 aa).

The signal sequence occupies residues 1-26 (MANSGVMKLVCLVLACMVVAAPLAEA). Intrachain disulfides connect Cys-30–Cys-77, Cys-40–Cys-54, Cys-55–Cys-100, and Cys-75–Cys-114.

The protein belongs to the plant LTP family.

Its function is as follows. Plant non-specific lipid-transfer proteins transfer phospholipids as well as galactolipids across membranes. May play a role in wax or cutin deposition in the cell walls of expanding epidermal cells and certain secretory tissues. The polypeptide is Non-specific lipid-transfer protein (Macadamia integrifolia (Macadamia nut)).